The primary structure comprises 436 residues: Adenylosuccinate synthetase (436 aa).

Residues 12-18 (GDEGKGK) and 40-42 (GHT) contribute to the GTP site. D13 acts as the Proton acceptor in catalysis. The Mg(2+) site is built by D13 and G40. Residues 13 to 16 (DEGK), 38 to 41 (NAGH), T128, R142, Q223, T238, and R302 contribute to the IMP site. The Proton donor role is filled by H41. 298–304 (TTTGRRR) provides a ligand contact to substrate. Residues R304, 330 to 332 (KLD), and 412 to 414 (SLG) each bind GTP.

It belongs to the adenylosuccinate synthetase family. As to quaternary structure, homodimer. Mg(2+) is required as a cofactor.

Its subcellular location is the cytoplasm. The catalysed reaction is IMP + L-aspartate + GTP = N(6)-(1,2-dicarboxyethyl)-AMP + GDP + phosphate + 2 H(+). It functions in the pathway purine metabolism; AMP biosynthesis via de novo pathway; AMP from IMP: step 1/2. In terms of biological role, plays an important role in the de novo pathway of purine nucleotide biosynthesis. Catalyzes the first committed step in the biosynthesis of AMP from IMP. The chain is Adenylosuccinate synthetase from Prochlorococcus marinus (strain MIT 9301).